The sequence spans 683 residues: Acyl-CoA synthetase short-chain family member 3, mitochondrial (683 aa).

Residues 1 to 29 (MKPSWLQCRKVTGAGTLGAPLPGSPSVRG) constitute a mitochondrion transit peptide. 223–226 (EPGR) contacts CoA. ATP is bound by residues 421–423 (GER) and 442–447 (DHWWQT). An N6-succinyllysine modification is found at K514. K520 bears the N6-acetyllysine mark. Residues D535, R550, and R561 each contribute to the ATP site. R620 is a CoA binding site.

This sequence belongs to the ATP-dependent AMP-binding enzyme family. As to expression, expressed in a wide range of tissues, with the highest levels observed in the liver followed by kidney.

It is found in the mitochondrion matrix. It catalyses the reaction acetate + ATP + CoA = acetyl-CoA + AMP + diphosphate. The catalysed reaction is propanoate + ATP + CoA = propanoyl-CoA + AMP + diphosphate. The enzyme catalyses butanoate + ATP + CoA = butanoyl-CoA + AMP + diphosphate. Its function is as follows. Catalyzes the synthesis of acetyl-CoA from short-chain fatty acids. Propionate is the preferred substrate but can also utilize acetate and butyrate with a much lower affinity. This Rattus norvegicus (Rat) protein is Acyl-CoA synthetase short-chain family member 3, mitochondrial (Acss3).